A 189-amino-acid chain; its full sequence is MINTNDFKTGQTIKFNNQIYQIIEFLHVKPGKGTAFVRSKLRNLRTGSVIDHTFNAGIKLEPALINKIKMQFLYSSQEKYIFMNTQTYEQLEINKDQLKEKLHYLYEGLLVEIIFYNNNEILTISLPDKISLKVTYAEPGVKGDTKTNSFKDATLETGLVIKVPLFINTGEKIIVNTETGLYLSRDNNK.

This sequence belongs to the elongation factor P family.

The protein resides in the cytoplasm. It functions in the pathway protein biosynthesis; polypeptide chain elongation. Functionally, involved in peptide bond synthesis. Stimulates efficient translation and peptide-bond synthesis on native or reconstituted 70S ribosomes in vitro. Probably functions indirectly by altering the affinity of the ribosome for aminoacyl-tRNA, thus increasing their reactivity as acceptors for peptidyl transferase. This chain is Elongation factor P, found in Phytoplasma australiense.